The sequence spans 197 residues: Casparian strip membrane protein 3 (197 aa).

Residues 1–35 (MSARVDIPADTSAAAKGTAPLIAASTHVKGGYKKG) lie on the Cytoplasmic side of the membrane. The chain crosses the membrane as a helical span at residues 36–56 (LAIFDLVLRLGAVVTALAAAA). The Extracellular segment spans residues 57–85 (TMGTTDQTLPFFTQFFQFQASYDDLPTFQ). Residues 86–106 (FFVIAMAIVSGYLVLSLPFSI) form a helical membrane-spanning segment. Residues 107 to 119 (VAIIRPHATGPRL) lie on the Cytoplasmic side of the membrane. Residues 120–140 (LLIILDTVALTLNTAAAAAAV) form a helical membrane-spanning segment. Topologically, residues 141 to 171 (AIVDLAQNGNSSANWLGICQQFGDFCQKASG) are extracellular. N-linked (GlcNAc...) asparagine glycosylation occurs at asparagine 150. A helical membrane pass occupies residues 172–192 (AVVASFIAAGVLLFLIVISAL). At 193–197 (ALRKR) the chain is on the cytoplasmic side.

This sequence belongs to the Casparian strip membrane proteins (CASP) family. In terms of assembly, homodimer and heterodimers.

It localises to the cell membrane. Regulates membrane-cell wall junctions and localized cell wall deposition. Required for establishment of the Casparian strip membrane domain (CSD) and the subsequent formation of Casparian strips, a cell wall modification of the root endodermis that determines an apoplastic barrier between the intraorganismal apoplasm and the extraorganismal apoplasm and prevents lateral diffusion. The polypeptide is Casparian strip membrane protein 3 (Populus trichocarpa (Western balsam poplar)).